The primary structure comprises 293 residues: Outer membrane protein assembly factor BamD (293 aa).

Residues 1-26 form the signal peptide; it reads MIQRPTFFSPIHLLAVLLATFILITG. A lipid anchor (N-palmitoyl cysteine) is attached at C27. C27 carries S-diacylglycerol cysteine lipidation.

It belongs to the BamD family. As to quaternary structure, part of the Bam complex.

It localises to the cell outer membrane. Its function is as follows. Part of the outer membrane protein assembly complex, which is involved in assembly and insertion of beta-barrel proteins into the outer membrane. The chain is Outer membrane protein assembly factor BamD from Xylella fastidiosa (strain Temecula1 / ATCC 700964).